The chain runs to 587 residues: Glutaconyl-CoA decarboxylase subunit alpha (587 aa).

Residues 31 to 298 (LKKIEEEIHQ…YDPEFFRVDD (268 aa)) form the CoA carboxyltransferase N-terminal domain. Residues 31–558 (LKKIEEEIHQ…RGYVEAFTEA (528 aa)) are carboxyltransferase. The 264-residue stretch at 295 to 558 (RVDDPKAPAF…RGYVEAFTEA (264 aa)) folds into the CoA carboxyltransferase C-terminal domain.

As to quaternary structure, heterooctamer consisting of two alpha, two beta, two gamma and two delta subunits.

It catalyses the reaction (2E)-glutaconyl-CoA + Na(+)(in) + H(+) = (2E)-butenoyl-CoA + Na(+)(out) + CO2. The protein operates within amino-acid degradation; L-glutamate degradation via hydroxyglutarate pathway; crotonoyl-CoA from L-glutamate: step 5/5. In terms of biological role, decarboxylase subunit of the primary sodium pump glutaconyl-CoA decarboxylase (GCD). The polypeptide is Glutaconyl-CoA decarboxylase subunit alpha (gcdA) (Acidaminococcus fermentans (strain ATCC 25085 / DSM 20731 / CCUG 9996 / CIP 106432 / VR4)).